The primary structure comprises 262 residues: Polyamine aminopropyltransferase (262 aa).

Residues 1–249 (MWITQEITPY…DIHRAAFALP (249 aa)) form the PABS domain. An S-methyl-5'-thioadenosine-binding site is contributed by N29. D83 provides a ligand contact to spermidine. Catalysis depends on D155, which acts as the Proton acceptor.

It belongs to the spermidine/spermine synthase family. As to quaternary structure, homodimer or homotetramer.

Its subcellular location is the cytoplasm. The enzyme catalyses S-adenosyl 3-(methylsulfanyl)propylamine + putrescine = S-methyl-5'-thioadenosine + spermidine + H(+). The protein operates within amine and polyamine biosynthesis; spermidine biosynthesis; spermidine from putrescine: step 1/1. Catalyzes the irreversible transfer of a propylamine group from the amino donor S-adenosylmethioninamine (decarboxy-AdoMet) to putrescine (1,4-diaminobutane) to yield spermidine. The sequence is that of Polyamine aminopropyltransferase from Helicobacter pylori (strain P12).